A 1331-amino-acid chain; its full sequence is uncharacterized protein (1331 aa).

The next 8 helical transmembrane spans lie at 373–393 (VIGV…SLIV), 487–507 (ALFL…LILI), 534–554 (LLIF…SFGI), 579–599 (VVGL…ISLL), 653–673 (LVFL…SFAT), 1206–1226 (VIAV…TTLI), 1255–1275 (IPLF…LIAL), and 1297–1317 (AIGS…LNWL).

Belongs to the ABC-4 integral membrane protein family.

The protein localises to the cell membrane. This is an uncharacterized protein from Mycoplasma genitalium (strain ATCC 33530 / DSM 19775 / NCTC 10195 / G37) (Mycoplasmoides genitalium).